The chain runs to 518 residues: Zinc finger protein 776 (518 aa).

The 76-residue stretch at Val-14–Val-89 folds into the KRAB domain. Glycyl lysine isopeptide (Lys-Gly) (interchain with G-Cter in SUMO2) cross-links involve residues Lys-171, Lys-196, Lys-220, and Lys-247. The C2H2-type 1; degenerate zinc-finger motif lies at Tyr-208–Leu-230. The C2H2-type 2; degenerate zinc finger occupies Tyr-236–Arg-258. 7 C2H2-type zinc fingers span residues Tyr-264–His-286, Tyr-292–His-314, Tyr-320–His-342, Tyr-348–His-370, Phe-376–His-398, Tyr-404–His-426, and Tyr-432–His-454. The C2H2-type 10; degenerate zinc-finger motif lies at His-460–His-482. Residues His-488 to His-510 form a C2H2-type 11 zinc finger.

It belongs to the krueppel C2H2-type zinc-finger protein family.

The protein localises to the nucleus. Its function is as follows. May be involved in transcriptional regulation. The protein is Zinc finger protein 776 (ZNF776) of Homo sapiens (Human).